Here is a 1027-residue protein sequence, read N- to C-terminus: C2 and GRAM domain-containing protein At5g50170 (1027 aa).

The C2 1 domain occupies 1–103 (MRLYVYILQA…ENQTLLPTWF (103 aa)). Residues 158-167 (SPKDLISSRD) are compositionally biased toward basic and acidic residues. 2 disordered regions span residues 158–177 (SPKD…HDGK) and 201–223 (LHDE…DQCS). Residues 168 to 177 (GKRRKHHDGK) show a composition bias toward basic residues. The segment covering 206–223 (SVGQSVNSNYEDATDQCS) has biased composition (polar residues). In terms of domain architecture, VASt 1 spans 253 to 426 (TGGVLVDQKY…LLAKTYKTLD (174 aa)). Residues 452 to 472 (FLYFWSSSVICAVLLSVYVVV) traverse the membrane as a helical segment. A C2 2 domain is found at 516-639 (TVHFVQARLH…TADELADLSV (124 aa)). A GRAM domain is found at 693-756 (AFQKLFGLPH…LWEDIDDIQV (64 aa)). Residues 855-1018 (MMSKVYTCDL…VIFDLFQKES (164 aa)) form the VASt 2 domain.

Its subcellular location is the membrane. This chain is C2 and GRAM domain-containing protein At5g50170, found in Arabidopsis thaliana (Mouse-ear cress).